Consider the following 1544-residue polypeptide: MSTIEIVSTVAEYTEIHSPVSSKFLLPSARDSSSSISLFSAIFWFWSWLFFKIMNIFLYYIPNIIVNLFSVNFQITLSLSSIVITLTGIISFCFLIVRYKYLTRYSKTTKSTDKPKSSNKNIDLVGSIKKNKRGDSKSTSNYLDEFLSAIKVFGYLERPVFHELTRNMTTQKLSSEEILYLDEKLGFSIVVEGTIQVYTKVNSVNSSTTSNSDDNELNFEKDDLLTIGDQCYQLLNEVKSGSPLSSLMSTLDLFKPVDPDTMSNRLFSPFELDSNPASNPLSPDNTGSKSFDPLSSGNFNDTSLSSSDRNYPNIVARPKPIEDSNNLNTATIAIIPYSAFQKVQSKYPKATSHIVTMVITRLYKITMNTIHSYLGLTREIIRSEIQLNESEGAKDSLPSYLYDGVIEKFYGDKNNETLLNKTAESPSVSINKTSSSSSSLPKKSTTSLRPLNRNQSSRYVVLDSRSKSTHPGDLLSSVPLSRRSDYYQTHTTIQPDPEEVRSQSRTKMTSPVLPKRQISSNGGPTLKGHSSSTTKFENIRDRTFSDEREETEETSLRIAIIENIFKILGINEVSNMIGSMSDLNSRSSSVNSSVVGLPSLMNNGNESKYPNGIFDFNTGKVRYDSISSFPTSLNKGANNNLKFYDTVNQSQLKDMDHENDKSSQVDINNLMFKRKSIPIQSFESNFYDVKNEFSKHLNIKYFGPNTTLVEQESFNSGLYYVIDGTLDVFYKPASKESENLTPMNKKKLYTVKSGGLAGYLSSIIGVRSLVSISTPGDKGVIVAHIPKNEFSKLLDKFYFLQLPVASKLKSLLSSQILTIDYALEWCHIPAGDVLCSQGDLANGFHIVLSGRFRVVRYNNNKSSEVNPDDNTDIHDYNNNLIDESLSYKSRKKKDDITILGEYGHGETIGEVEVLTASRRTNSLIAVRDSETARIPRTLFEMLSLRNPSIMVKVSRIVANKMAKKDNIGIPSTISSNVPLIVTNTDSHISNDYKTITILPTVSGLPVRDFADKLVSALKNIGRNVIALDQASTLTHLGRHAFDERLAQLKLSGYFAYLEEEYQTIVYVCDTPLKSNWTSTCISQGDCILLLADADDDDVATNIGEYERLLMKLKTTARTDLCLIHADKYVEPGSTSVWLKNRIWVQGHHHIQMEIARDNSVQQGQKTSIIKNIAAKISSRTNTNIKSRLENVKTKAILSLNKFNNRLSRRTHSYKTVQAHKNDFLRLARILSNESVGLVLGGGGSRGISHVGVVMALEKHGIPIDLIGGTSIGSFVGGLYAKDYNIVSIYGRAKRFAKRVSSWWRMVLDLTYPVTSYITGYEFNRGIWKIFGSSEIEDFWIRYFCNSTNITNSTMDIHESGFSWRFIRASMSLAGLLPPITYGGSMLLDGGYLDNLPVMEMKKKGAKYIIAVDVGSVDDRTPMNYGDTLSGFWVLFNRWNPFSRHPNVPNMMDIQLRLAYVASVNALELAKKTPGVIYLRPPIDDYATLDFAKFDEIYHVGMAYADNLLTRWEQTGKIPPIAGMIDRSRIRNGEERKSLYRRSSI.

At 1–37 (MSTIEIVSTVAEYTEIHSPVSSKFLLPSARDSSSSIS) the chain is on the cytoplasmic side. The helical transmembrane segment at 38 to 58 (LFSAIFWFWSWLFFKIMNIFL) threads the bilayer. Residues 59–76 (YYIPNIIVNLFSVNFQIT) are Lumenal-facing. A helical transmembrane segment spans residues 77 to 97 (LSLSSIVITLTGIISFCFLIV). Over 98 to 1544 (RYKYLTRYSK…RKSLYRRSSI (1447 aa)) the chain is Cytoplasmic. 2 disordered regions span residues 265-312 (RLFS…RNYP) and 424-552 (ESPS…EETE). Polar residues predominate over residues 275 to 310 (NPASNPLSPDNTGSKSFDPLSSGNFNDTSLSSSDRN). Residues 425 to 447 (SPSVSINKTSSSSSSLPKKSTTS) are compositionally biased toward low complexity. Polar residues-rich tracts occupy residues 448-458 (LRPLNRNQSSR) and 517-536 (QISSNGGPTLKGHSSSTTKF). Residues 537–546 (ENIRDRTFSD) are compositionally biased toward basic and acidic residues. Residues 681–811 (SFES…LKSL) and 807–960 (KLKS…VANK) each bind a nucleoside 3',5'-cyclic phosphate. The PNPLA domain occupies 1237-1401 (LVLGGGGSRG…LDNLPVMEMK (165 aa)). The short motif at 1241-1246 (GGGSRG) is the GXGXXG element. A GXSXG motif is present at residues 1268–1272 (GTSIG). The active-site Nucleophile is Ser-1270. The active-site Proton acceptor is Asp-1388. The DGA/G motif lies at 1388–1390 (DGG).

This sequence belongs to the NTE family.

The protein localises to the endoplasmic reticulum membrane. It catalyses the reaction a 1-acyl-sn-glycero-3-phosphocholine + H2O = sn-glycerol 3-phosphocholine + a fatty acid + H(+). With respect to regulation, inhibited by organophosphorus esters. In terms of biological role, intracellular phospholipase B that catalyzes the double deacylation of phosphatidylcholine (PC) to glycerophosphocholine (GroPCho). Plays an important role in membrane lipid homeostasis. Responsible for the rapid PC turnover in response to inositol, elevated temperatures, or when choline is present in the growth medium. The chain is Lysophospholipase NTE1 (NTE1) from Debaryomyces hansenii (strain ATCC 36239 / CBS 767 / BCRC 21394 / JCM 1990 / NBRC 0083 / IGC 2968) (Yeast).